Consider the following 295-residue polypeptide: Cyclin-G1 (295 aa).

This sequence belongs to the cyclin family. Cyclin G subfamily.

It is found in the nucleus. Functionally, may play a role in growth regulation. Is associated with G2/M phase arrest in response to DNA damage. May be an intermediate by which p53 mediates its role as an inhibitor of cellular proliferation. This is Cyclin-G1 (CCNG1) from Pongo abelii (Sumatran orangutan).